The following is a 583-amino-acid chain: ATP-dependent lipid A-core flippase (583 aa).

The next 6 membrane-spanning stretches (helical) occupy residues 32–52 (VAFL…TGFL), 71–91 (LHLL…AGFI), 115–135 (LMSL…TSKL), 160–180 (ILGM…IFAV), 259–279 (SMVV…YAVG), and 286–306 (FAAF…LTSL). The region spanning 34 to 312 (FLISIIALVT…LTSLNEELQV (279 aa)) is the ABC transmembrane type-1 domain. Residues 344 to 580 (IVFENVTLQY…DGHYAKLYRK (237 aa)) enclose the ABC transporter domain. ATP is bound at residue 378-385 (GRSGGGKT).

The protein belongs to the ABC transporter superfamily. Lipid exporter (TC 3.A.1.106) family. As to quaternary structure, homodimer.

It is found in the cell inner membrane. The catalysed reaction is ATP + H2O + lipid A-core oligosaccharideSide 1 = ADP + phosphate + lipid A-core oligosaccharideSide 2.. In terms of biological role, involved in lipopolysaccharide (LPS) biosynthesis. Translocates lipid A-core from the inner to the outer leaflet of the inner membrane. Transmembrane domains (TMD) form a pore in the inner membrane and the ATP-binding domain (NBD) is responsible for energy generation. The sequence is that of ATP-dependent lipid A-core flippase from Methylobacillus flagellatus (strain ATCC 51484 / DSM 6875 / VKM B-1610 / KT).